The sequence spans 570 residues: Pleckstrin homology domain-containing family D member 1 (570 aa).

Basic and acidic residues predominate over residues 1–13; sequence MTTKTTPKELKAK. The interval 1-42 is disordered; sequence MTTKTTPKELKAKKESKKKGSAPEPPKNGPPRTSPPNTIEKK. Positions 23–34 are enriched in pro residues; it reads PEPPKNGPPRTS. Residues 83-192 enclose the PH domain; the sequence is GVQNYGILMK…WLKALRSATK (110 aa). The stretch at 202–448 forms a coiled coil; the sequence is ETMIRELENR…TGAQMTELQE (247 aa). The segment covering 542-551 has biased composition (basic residues); sequence SKRGIRSSFR. Residues 542 to 570 form a disordered region; that stretch reads SKRGIRSSFRKKTDSITTQPREKEPLMQL. The span at 561-570 shows a compositional bias: basic and acidic residues; the sequence is PREKEPLMQL.

It belongs to the PLEKHD1 family.

This is Pleckstrin homology domain-containing family D member 1 from Caenorhabditis elegans.